A 959-amino-acid chain; its full sequence is Ribonucleoside-diphosphate reductase large subunit (959 aa).

Substrate is bound by residues T68, 83-84, and G112; that span reads SC. A disulfide bond links C84 and C626. The active-site Proton acceptor is N270. The region spanning 378-508 is the DOD-type homing endonuclease domain; sequence LPTLFGNSEH…IQLLLIGMGV (131 aa). Residue C611 is the Cysteine radical intermediate of the active site. E613 functions as the Proton acceptor in the catalytic mechanism. Position 751-755 (751-755) interacts with substrate; it reads PTATS.

The protein belongs to the ribonucleoside diphosphate reductase large chain family. Heterotetramer composed of a homodimer of the large subunit (R1) and a homodimer of the small subunit (R2). Larger multisubunit protein complex are also active, composed of (R1)n(R2)n.

The catalysed reaction is a 2'-deoxyribonucleoside 5'-diphosphate + [thioredoxin]-disulfide + H2O = a ribonucleoside 5'-diphosphate + [thioredoxin]-dithiol. Under complex allosteric control mediated by deoxynucleoside triphosphates and ATP binding. The type of nucleotide bound at the specificity site determines substrate preference. It seems probable that ATP makes the enzyme reduce CDP and UDP, dGTP favors ADP reduction and dTTP favors GDP reduction. Functionally, ribonucleoside-diphosphate reductase holoenzyme provides the precursors necessary for viral DNA synthesis. Allows virus growth in non-dividing cells. Catalyzes the biosynthesis of deoxyribonucleotides from the corresponding ribonucleotides. The sequence is that of Ribonucleoside-diphosphate reductase large subunit from Acheta domesticus (House cricket).